A 93-amino-acid polypeptide reads, in one-letter code: Phosphoribosyl-ATP pyrophosphatase (93 aa).

The protein belongs to the PRA-PH family.

It is found in the cytoplasm. The enzyme catalyses 1-(5-phospho-beta-D-ribosyl)-ATP + H2O = 1-(5-phospho-beta-D-ribosyl)-5'-AMP + diphosphate + H(+). The protein operates within amino-acid biosynthesis; L-histidine biosynthesis; L-histidine from 5-phospho-alpha-D-ribose 1-diphosphate: step 2/9. The chain is Phosphoribosyl-ATP pyrophosphatase from Rhodococcus jostii (strain RHA1).